A 585-amino-acid chain; its full sequence is Protein FAM83D (585 aa).

The tract at residues Met-1–Ser-296 is DUF1669. Ser-295 is modified (phosphoserine). 2 disordered regions span residues Leu-334–Ser-411 and Ala-425–Ser-482. The interval Thr-337–Gln-585 is required for interaction with KIF22 and function in chromosome congression. Composition is skewed to basic and acidic residues over residues Glu-347–Ser-360 and Asp-369–Val-383. The span at Ala-425–Thr-441 shows a compositional bias: polar residues. Residue Ser-458 is modified to Phosphoserine. Low complexity predominate over residues Ser-458–Ser-482. A Phosphothreonine modification is found at Thr-511.

It belongs to the FAM83 family. Interacts with FBXW7; promotes FBXW7 degradation. May interact with RAF1. Interacts with KIF22; recruits KIF22 to mitotic spindle microtubules. Interacts (via C-terminus) with DYNLL1. Interacts with HMMR. Directly interacts (via DUF1669) with CSNK1A1 and CSNK1A1L. In terms of processing, phosphorylated during mitosis.

The protein resides in the cytoplasm. The protein localises to the cytoskeleton. It localises to the spindle. Its subcellular location is the spindle pole. Through the degradation of FBXW7, may act indirectly on the expression and downstream signaling of MTOR, JUN and MYC. May play also a role in cell proliferation through activation of the ERK1/ERK2 signaling cascade. May also be important for proper chromosome congression and alignment during mitosis through its interaction with KIF22. This Mus musculus (Mouse) protein is Protein FAM83D.